Reading from the N-terminus, the 121-residue chain is Phosphoribosyl-ATP pyrophosphatase (121 aa).

This sequence belongs to the PRA-PH family.

Its subcellular location is the cytoplasm. It catalyses the reaction 1-(5-phospho-beta-D-ribosyl)-ATP + H2O = 1-(5-phospho-beta-D-ribosyl)-5'-AMP + diphosphate + H(+). The protein operates within amino-acid biosynthesis; L-histidine biosynthesis; L-histidine from 5-phospho-alpha-D-ribose 1-diphosphate: step 2/9. The chain is Phosphoribosyl-ATP pyrophosphatase from Nitrosospira multiformis (strain ATCC 25196 / NCIMB 11849 / C 71).